Reading from the N-terminus, the 121-residue chain is Ribosome-binding factor A (121 aa).

It belongs to the RbfA family. As to quaternary structure, monomer. Binds 30S ribosomal subunits, but not 50S ribosomal subunits or 70S ribosomes.

The protein resides in the cytoplasm. Functionally, one of several proteins that assist in the late maturation steps of the functional core of the 30S ribosomal subunit. Associates with free 30S ribosomal subunits (but not with 30S subunits that are part of 70S ribosomes or polysomes). Required for efficient processing of 16S rRNA. May interact with the 5'-terminal helix region of 16S rRNA. This is Ribosome-binding factor A from Lactobacillus helveticus (strain DPC 4571).